The chain runs to 337 residues: uncharacterized protein (337 aa).

The interval 291–314 (NKTRQCSNTKTTTKSTMTPINNGF) is disordered. The segment covering 299–308 (TKTTTKSTMT) has biased composition (low complexity).

This is an uncharacterized protein from Acanthamoeba polyphaga mimivirus (APMV).